The chain runs to 596 residues: Interleukin-1 receptor-associated kinase 3 (596 aa).

Positions 41 to 106 (WRGLAERLSS…RAIHLITNYG (66 aa)) constitute a Death domain. Residue S110 is modified to Phosphoserine; by IRAK1. Residues 165 to 452 (FHKDFLIGEG…LESTQASLYF (288 aa)) form the Protein kinase domain. ATP-binding positions include 171-179 (IGEGEIFEV), K192, 295-298 (SSAN), and D311. The residue at position 467 (S467) is a Phosphoserine. Residues 560–596 (NIDPSSEAPGHSCRSRPVESSCSSKFSWDEYEQYKKE) are disordered.

This sequence belongs to the protein kinase superfamily. TKL Ser/Thr protein kinase family. Pelle subfamily. Monomer. Homodimer; disulfide-linked. May interact with IRAK4 (when phosphorylated). Interacts (when phosphorylated at Ser-110) with PIN1 (via WW domain) in response to IL33-mediated (but not TLR4 ligand LPS) dendritic cell stimulation. Expressed in eosinophils, dendritic cells and/or monocytes (at protein level). Expressed predominantly in peripheral blood lymphocytes.

It is found in the cytoplasm. The protein resides in the nucleus. Its function is as follows. Putative inactive protein kinase which regulates signaling downstream of immune receptors including IL1R and Toll-like receptors. Inhibits dissociation of IRAK1 and IRAK4 from the Toll-like receptor signaling complex by either inhibiting the phosphorylation of IRAK1 and IRAK4 or stabilizing the receptor complex. Upon IL33-induced lung inflammation, positively regulates expression of IL6, CSF3, CXCL2 and CCL5 mRNAs in dendritic cells. This is Interleukin-1 receptor-associated kinase 3 from Homo sapiens (Human).